Consider the following 142-residue polypeptide: 3-hydroxyacyl-[acyl-carrier-protein] dehydratase FabZ (142 aa).

Residue His-47 is part of the active site.

This sequence belongs to the thioester dehydratase family. FabZ subfamily.

The protein resides in the cytoplasm. The enzyme catalyses a (3R)-hydroxyacyl-[ACP] = a (2E)-enoyl-[ACP] + H2O. Its function is as follows. Involved in unsaturated fatty acids biosynthesis. Catalyzes the dehydration of short chain beta-hydroxyacyl-ACPs and long chain saturated and unsaturated beta-hydroxyacyl-ACPs. The sequence is that of 3-hydroxyacyl-[acyl-carrier-protein] dehydratase FabZ from Thermoanaerobacter sp. (strain X514).